The sequence spans 216 residues: Trimethylamine corrinoid protein 1 (216 aa).

The B12-binding N-terminal domain maps to 1–92 (MASKEEIIAK…EMEKRKSETK (92 aa)). The B12-binding domain maps to 94–216 (LGTVVIGTIE…VVSKVRAVLL (123 aa)). His-107 lines the methylcob(III)alamin pocket.

Belongs to the methylamine corrinoid protein family. As to quaternary structure, can form a complex with MttB.

The protein operates within one-carbon metabolism; methanogenesis from trimethylamine. Functionally, acts probably as a methyl group carrier between MttB and either MtbA or MtaA. The polypeptide is Trimethylamine corrinoid protein 1 (mttC1) (Methanosarcina acetivorans (strain ATCC 35395 / DSM 2834 / JCM 12185 / C2A)).